Consider the following 148-residue polypeptide: Large ribosomal subunit protein uL11 (148 aa).

This sequence belongs to the universal ribosomal protein uL11 family. As to quaternary structure, part of the ribosomal stalk of the 50S ribosomal subunit. Interacts with L10 and the large rRNA to form the base of the stalk. L10 forms an elongated spine to which L12 dimers bind in a sequential fashion forming a multimeric L10(L12)X complex. Post-translationally, one or more lysine residues are methylated.

In terms of biological role, forms part of the ribosomal stalk which helps the ribosome interact with GTP-bound translation factors. This Myxococcus xanthus (strain DK1622) protein is Large ribosomal subunit protein uL11.